Reading from the N-terminus, the 192-residue chain is dTTP/UTP pyrophosphatase (192 aa).

Asp-72 acts as the Proton acceptor in catalysis.

It belongs to the Maf family. YhdE subfamily. A divalent metal cation is required as a cofactor.

Its subcellular location is the cytoplasm. It carries out the reaction dTTP + H2O = dTMP + diphosphate + H(+). The catalysed reaction is UTP + H2O = UMP + diphosphate + H(+). In terms of biological role, nucleoside triphosphate pyrophosphatase that hydrolyzes dTTP and UTP. May have a dual role in cell division arrest and in preventing the incorporation of modified nucleotides into cellular nucleic acids. This Hydrogenovibrio crunogenus (strain DSM 25203 / XCL-2) (Thiomicrospira crunogena) protein is dTTP/UTP pyrophosphatase.